A 251-amino-acid chain; its full sequence is Cytochrome c oxidase subunit 2 (251 aa).

Helical transmembrane passes span 42–62 and 83–103; these read NIMFYLFIILGLVSWMLFTIV and IIWTMFPAVILLIIAFPSFIL. Cu cation is bound by residues histidine 186, cysteine 221, glutamate 223, cysteine 225, histidine 229, and methionine 232. Glutamate 223 serves as a coordination point for Mg(2+).

The protein belongs to the cytochrome c oxidase subunit 2 family. Component of the cytochrome c oxidase (complex IV, CIV), a multisubunit enzyme composed of a catalytic core of 3 subunits and several supernumerary subunits. The complex exists as a monomer or a dimer and forms supercomplexes (SCs) in the inner mitochondrial membrane with ubiquinol-cytochrome c oxidoreductase (cytochrome b-c1 complex, complex III, CIII). It depends on Cu cation as a cofactor.

It localises to the mitochondrion inner membrane. The catalysed reaction is 4 Fe(II)-[cytochrome c] + O2 + 8 H(+)(in) = 4 Fe(III)-[cytochrome c] + 2 H2O + 4 H(+)(out). In terms of biological role, component of the cytochrome c oxidase, the last enzyme in the mitochondrial electron transport chain which drives oxidative phosphorylation. The respiratory chain contains 3 multisubunit complexes succinate dehydrogenase (complex II, CII), ubiquinol-cytochrome c oxidoreductase (cytochrome b-c1 complex, complex III, CIII) and cytochrome c oxidase (complex IV, CIV), that cooperate to transfer electrons derived from NADH and succinate to molecular oxygen, creating an electrochemical gradient over the inner membrane that drives transmembrane transport and the ATP synthase. Cytochrome c oxidase is the component of the respiratory chain that catalyzes the reduction of oxygen to water. Electrons originating from reduced cytochrome c in the intermembrane space (IMS) are transferred via the dinuclear copper A center (CU(A)) of subunit 2 and heme A of subunit 1 to the active site in subunit 1, a binuclear center (BNC) formed by heme A3 and copper B (CU(B)). The BNC reduces molecular oxygen to 2 water molecules using 4 electrons from cytochrome c in the IMS and 4 protons from the mitochondrial matrix. In Candida glabrata (strain ATCC 2001 / BCRC 20586 / JCM 3761 / NBRC 0622 / NRRL Y-65 / CBS 138) (Yeast), this protein is Cytochrome c oxidase subunit 2 (COX2).